The primary structure comprises 307 residues: MNAYSVSLDFTKPSLFTRITLSSQIPLTMATTVNKTVRVAAAQMTSVNDLMTNFATCSRLVQEAALAGAKLICFPENFSFVGDKEGESVKIAEPLDGPVMERYCSLARDSNIWLSLGGFQERFDDTHLCNTHVVIDDAGMIRDTYQKMHLFDVDVPGGSSYKESSFTVPGTKIVSVDSPVGRLGLTVCYDLRFPKIYQQLRFEQKAQVLLVPSAFTKVTGEAHWEILLRARAIETQCYVIAAAQAGKHNEKRESYGDTLIIDPWGTVVGRLPDRVSTGIVVADIDFSLIDSVRTKMPIDKQRVSIDL.

The transit peptide at 1–36 (MNAYSVSLDFTKPSLFTRITLSSQIPLTMATTVNKT) directs the protein to the chloroplast. One can recognise a CN hydrolase domain in the interval 37–286 (VRVAAAQMTS…TGIVVADIDF (250 aa)). Glu-76 serves as the catalytic Proton acceptor. Lys-147 serves as the catalytic Proton donor. Cys-188 (nucleophile) is an active-site residue.

It belongs to the nitrilase superfamily. NIT1/NIT2 family.

The protein localises to the plastid. Its subcellular location is the chloroplast. The protein resides in the cytoplasm. It carries out the reaction N-(4-oxoglutaryl)-L-cysteinylglycine + H2O = L-cysteinylglycine + 2-oxoglutarate. It catalyses the reaction N-(4-carboxy-4-oxobutanoyl)-L-ethylglycylglycine + H2O = N-(2-aminobutanoyl)glycine + 2-oxoglutarate. In terms of biological role, catalyzes the hydrolysis of the amide bond in N-(4-oxoglutarate)-L-cysteinylglycine (deaminated glutathione), a metabolite repair reaction to dispose of the harmful deaminated glutathione. Possesses amidase activity toward deaminated ophthalmate in vitro. This Arabidopsis thaliana (Mouse-ear cress) protein is Deaminated glutathione amidase, chloroplastic/cytosolic.